Reading from the N-terminus, the 360-residue chain is MKQIPIEYQVSPYMVFFLIITIQMGVGMLGFERISAKLVGNDAWISTLLFGISVNVMIWIIYQILNQGNGDIIAINQNVLGKWIGGLLNFIFLSYIVLLGATTLHTYIEVVHVWMFPSISSWVIAGAFLGLCYYIVTGGFRVVAGIGFFGIVIPSILIFTFFYPLQYADFRNLFPIAQHSFLEIMKGMKGNMFSFFGFEMLLLYYPFIKKARTSQKYAHYANLVTTIVYTYLMILTLAFFSEKQLANAIWAYLSMIKIIQFPFIERFEYIIVSVWAFFILPNVSFTLWGVSRGIKEALGIKQKYVLPVIILFIFILSFFLNNRNKINLLNTWTGQIGFVYIYVYLPVLWLIQTAKIKLRR.

10 helical membrane-spanning segments follow: residues 11–31 (SPYM…MLGF), 45–65 (ISTL…YQIL), 84–104 (IGGL…ATTL), 116–136 (FPSI…YYIV), 142–162 (VVAG…FTFF), 188–208 (MKGN…YPFI), 220–240 (YANL…LAFF), 270–290 (IIVS…LWGV), 300–320 (IKQK…SFFL), and 331–351 (TWTG…LWLI).

This sequence belongs to the amino acid-polyamine-organocation (APC) superfamily. Spore germination protein (SGP) (TC 2.A.3.9) family.

It localises to the membrane. Required for the germination response to inosine. Has no role in L-alanine germination. The sequence is that of Spore germination protein GerQB (gerQB) from Bacillus cereus.